The primary structure comprises 304 residues: Voltage-dependent anion channel-forming protein YneE (304 aa).

A run of 4 helical transmembrane segments spans residues 28 to 48 (LLLN…YTHL), 50 to 70 (IKFT…FLGF), 194 to 214 (VLAG…TLIL), and 220 to 240 (LFCI…TPFI).

It belongs to the anion channel-forming bestrophin (TC 1.A.46) family.

It localises to the cell membrane. This is Voltage-dependent anion channel-forming protein YneE (yneE) from Escherichia coli (strain K12).